The chain runs to 122 residues: Replication factor A protein 3 (122 aa).

The protein belongs to the replication factor A protein 3 family. As to quaternary structure, component of the heterotrimeric canonical replication protein A complex (RPA). In terms of processing, the N-terminus is blocked.

It is found in the nucleus. In terms of biological role, as part of the replication protein A (RPA/RP-A), a single-stranded DNA-binding heterotrimeric complex, may play an essential role in DNA replication, recombination and repair. Binds and stabilizes single-stranded DNA intermediates, preventing complementary DNA reannealing and recruiting different proteins involved in DNA metabolism. Stimulates the activity of a cognate strand exchange protein (SEP1). This is Replication factor A protein 3 (RFA3) from Saccharomyces cerevisiae (strain ATCC 204508 / S288c) (Baker's yeast).